A 257-amino-acid chain; its full sequence is Caspase-14 (257 aa).

Residues His-93 and Cys-136 contribute to the active site. A propeptide spanning residues Asp-156–Leu-167 is cleaved from the precursor.

This sequence belongs to the peptidase C14A family. Heterodimer of a large and a small subunit, both processed from the precursor; the mature active form is a p17/p10 dimer and the intermediate form a p20/p8 dimer. In terms of processing, maturation by proteolytic processing appears to be a two-step process. The precursor is processed by KLK7 to yield the p20/p8 intermediate form which acts the precursor to yield the p17/p10 mature form. Initially it was reported that cleavage by granzyme B, caspase-8 and -10 generates the two active subunits, however the physiological relevance has not been established. Embryo, adult liver and less in adult brain and kidney. Expressed in differentiating keratinocytes of embryonic skin (at protein level). Expressed in keratinocytes of adult skin suprabasal layers (at protein level).

Its subcellular location is the cytoplasm. It is found in the nucleus. Functionally, non-apoptotic caspase which is involved in epidermal differentiation. Seems to play a role in keratinocyte differentiation and is required for cornification. Regulates maturation of the epidermis by proteolytically processing filaggrin. In vitro is equally active on the synthetic caspase substrates WEHD-ACF and IETD-AFC. Involved in processing of prosaposin in the epidermis. May be involved in retinal pigment epithelium cell barrier function. In Mus musculus (Mouse), this protein is Caspase-14 (Casp14).